Here is a 666-residue protein sequence, read N- to C-terminus: Polyamine deacetylase HDAC10 (666 aa).

The segment at 1–323 is histone deacetylase; that stretch reads MGTALVYHED…VCMMVQTLLG (323 aa). The active site involves histidine 135.

The protein belongs to the histone deacetylase family. HD type 2 subfamily. As to quaternary structure, interacts with HDAC3. Interacts with HDAC2 and NCOR2/SMRT. Interacts with HSPA8/HSC70. Interacts with MSH2. In terms of tissue distribution, widely expressed.

It is found in the cytoplasm. It localises to the nucleus. It carries out the reaction N(8)-acetylspermidine + H2O = spermidine + acetate. It catalyses the reaction N-acetylputrescine + H2O = putrescine + acetate. The enzyme catalyses N-acetylcadaverine + H2O = cadaverine + acetate. The catalysed reaction is N(6)-acetyl-L-lysyl-[protein] + H2O = L-lysyl-[protein] + acetate. In terms of biological role, polyamine deacetylase (PDAC), which acts preferentially on N(8)-acetylspermidine, and also on acetylcadaverine and acetylputrescine. Exhibits attenuated catalytic activity toward N(1),N(8)-diacetylspermidine and very low activity, if any, toward N(1)-acetylspermidine. Histone deacetylase activity has been observed in vitro. Has also been shown to be involved in MSH2 deacetylation. The physiological relevance of protein/histone deacetylase activity is unclear and could be very weak. May play a role in the promotion of late stages of autophagy, possibly autophagosome-lysosome fusion and/or lysosomal exocytosis in neuroblastoma cells. May play a role in homologous recombination. May promote DNA mismatch repair. This is Polyamine deacetylase HDAC10 (Hdac10) from Mus musculus (Mouse).